The primary structure comprises 396 residues: Cyclic GMP-AMP synthase-like receptor (396 aa).

Residues serine 63 and 75–77 (EFD) contribute to the ATP site. 3 residues coordinate Mg(2+): glutamate 75, aspartate 77, and aspartate 194. Aspartate 194 contributes to the GTP binding site. Residues 241 to 244 (QEQE), lysine 262, and 275 to 279 (SYYLK) each bind ATP. Mn(2+) is bound by residues valine 286, glutamate 287, and aspartate 292. Positions 376–396 (IMNGGNPQQSANAENGSCLSM) are disordered. Over residues 380–396 (GNPQQSANAENGSCLSM) the composition is skewed to polar residues.

It belongs to the mab-21 family. Mg(2+) is required as a cofactor. Mn(2+) serves as cofactor.

The enzyme catalyses GTP + ATP = 2',3'-cGAMP + 2 diphosphate. The catalysed reaction is GTP + ATP = pppGp(2'-5')A + diphosphate. It catalyses the reaction pppGp(2'-5')A = 2',3'-cGAMP + diphosphate. Nucleotidyltransferase that catalyzes the formation of cyclic GMP-AMP (2',3'-cGAMP) from ATP and GTP and plays a key role in innate immunity. Acts as a key sensor of double-stranded RNA (dsRNA), the presence of dsRNA in the cytoplasm being a danger signal that triggers the immune responses. Directly binds dsRNA, activating the nucleotidyltransferase activity, leading to synthesis of 2',3'-cGAMP, a second messenger that binds to and activates Sting, thereby triggering the immune response via activation of the NF-kappa-B transcription factor. This is Cyclic GMP-AMP synthase-like receptor from Aethina tumida (Small hive beetle).